Consider the following 169-residue polypeptide: Endoribonuclease YbeY (169 aa).

Zn(2+) contacts are provided by His-117, His-121, and His-127.

It belongs to the endoribonuclease YbeY family. It depends on Zn(2+) as a cofactor.

Its subcellular location is the cytoplasm. Its function is as follows. Single strand-specific metallo-endoribonuclease involved in late-stage 70S ribosome quality control and in maturation of the 3' terminus of the 16S rRNA. The polypeptide is Endoribonuclease YbeY (Mesoplasma florum (strain ATCC 33453 / NBRC 100688 / NCTC 11704 / L1) (Acholeplasma florum)).